Here is a 274-residue protein sequence, read N- to C-terminus: Probable lipoprotein peptidase YaeF (274 aa).

An N-terminal signal peptide occupies residues 1–20; that stretch reads MDKPKAYCRLFLPSFLLLSA. C21 carries N-palmitoyl cysteine lipidation. The S-diacylglycerol cysteine moiety is linked to residue C21. Catalysis depends on C207, which acts as the Nucleophile. H257 serves as the catalytic Proton acceptor.

The protein localises to the cell inner membrane. The chain is Probable lipoprotein peptidase YaeF (yaeF) from Escherichia coli (strain K12).